Consider the following 195-residue polypeptide: Myelin-associated neurite-outgrowth inhibitor (195 aa).

Methionine 1 is modified (N-acetylmethionine). Residues 1–18 (MNPVYSPGSSGVPYANAK) lie on the Cytoplasmic side of the membrane. Residue serine 6 is modified to Phosphoserine. The chain crosses the membrane as a helical span at residues 19-42 (GIGYPAGFPMGYAAAAPAYSPNMY). The Extracellular segment spans residues 43–142 (PGANPTFQAG…PAPLPPPRGN (100 aa)). Residue asparagine 46 is glycosylated (N-linked (GlcNAc...) asparagine). A helical transmembrane segment spans residues 143–164 (GVTMGMVAGTTMAMSAGTLLTA). The Cytoplasmic portion of the chain corresponds to 165-195 (HSPTPVAPHPVTVPTYRAPGTPTYSYVPPQW).

Belongs to the FAM168 family. May form homodimers. May interact with DAZAP2, FAM168A, PRDX6, RBM6, TMTC1 and YPEL2. Interacts with CDC27. In terms of processing, N-glycosylated.

The protein resides in the cytoplasm. It is found in the perinuclear region. It localises to the cell membrane. Its subcellular location is the cell projection. The protein localises to the axon. Functionally, inhibitor of neuronal axonal outgrowth. Acts as a negative regulator of CDC42 and STAT3 and a positive regulator of STMN2. Positive regulator of CDC27. The chain is Myelin-associated neurite-outgrowth inhibitor (FAM168B) from Bos taurus (Bovine).